Consider the following 337-residue polypeptide: Glyceraldehyde-3-phosphate dehydrogenase 1 (337 aa).

NAD(+) is bound by residues Arg-12–Ile-13, Asp-34, and Met-79. D-glyceraldehyde 3-phosphate contacts are provided by residues Ser-151–Thr-153, Thr-182, Thr-211–Gly-212, and Arg-234. Cys-152 serves as the catalytic Nucleophile. An NAD(+)-binding site is contributed by Asn-316.

This sequence belongs to the glyceraldehyde-3-phosphate dehydrogenase family. As to quaternary structure, homotetramer.

It localises to the cytoplasm. The enzyme catalyses D-glyceraldehyde 3-phosphate + phosphate + NAD(+) = (2R)-3-phospho-glyceroyl phosphate + NADH + H(+). It participates in carbohydrate degradation; glycolysis; pyruvate from D-glyceraldehyde 3-phosphate: step 1/5. The sequence is that of Glyceraldehyde-3-phosphate dehydrogenase 1 (GAP1) from Giardia intestinalis (Giardia lamblia).